A 612-amino-acid polypeptide reads, in one-letter code: Phosphopentomutase (612 aa).

Alanine 2 is modified (N-acetylalanine). The alpha-D-glucose 1,6-bisphosphate site is built by arginine 63 and serine 165. Serine 165 (phosphoserine intermediate) is an active-site residue. 4 residues coordinate Mg(2+): serine 165, aspartate 322, aspartate 324, and aspartate 326. Serine 165 is subject to Phosphoserine. Residues aspartate 326, arginine 327, threonine 400, glutamate 424, and lysine 438 each contribute to the alpha-D-glucose 1,6-bisphosphate site.

This sequence belongs to the phosphohexose mutase family. Monomer. It depends on Mg(2+) as a cofactor.

Its subcellular location is the cytoplasm. It localises to the cytosol. It carries out the reaction alpha-D-ribose 1-phosphate = D-ribose 5-phosphate. The enzyme catalyses 2-deoxy-alpha-D-ribose 1-phosphate = 2-deoxy-D-ribose 5-phosphate. The catalysed reaction is alpha-D-glucose 1-phosphate = alpha-D-glucose 6-phosphate. It catalyses the reaction O-phospho-L-seryl-[protein] + alpha-D-glucose 1-phosphate = alpha-D-glucose 1,6-bisphosphate + L-seryl-[protein]. It carries out the reaction alpha-D-glucose 1,6-bisphosphate + L-seryl-[protein] = O-phospho-L-seryl-[protein] + alpha-D-glucose 6-phosphate. Catalyzes the conversion of the nucleoside breakdown products ribose-1-phosphate and deoxyribose-1-phosphate to the corresponding 5-phosphopentoses. Catalyzes the reversible isomerization of alpha-D-glucose 1-phosphate to alpha-D-glucose 6-phosphate but with a lower catalytic efficiency. The mechanism proceeds via the intermediate compound alpha-D-glucose 1,6-bisphosphate. In vitro, also has a low glucose 1,6-bisphosphate synthase activity which is most probably not physiologically relevant. In Pongo abelii (Sumatran orangutan), this protein is Phosphopentomutase (PGM2).